We begin with the raw amino-acid sequence, 394 residues long: Small ribosomal subunit protein uS2m (394 aa).

A mitochondrion-targeting transit peptide spans 1–25 (MQRHVFARNFRRLSLLRNPSLTKRF).

This sequence belongs to the universal ribosomal protein uS2 family. In terms of assembly, component of the mitochondrial small ribosomal subunit (mt-SSU). Mature yeast 74S mitochondrial ribosomes consist of a small (37S) and a large (54S) subunit. The 37S small subunit contains a 15S ribosomal RNA (15S mt-rRNA) and 34 different proteins. The 54S large subunit contains a 21S rRNA (21S mt-rRNA) and 46 different proteins.

It is found in the mitochondrion. Component of the mitochondrial ribosome (mitoribosome), a dedicated translation machinery responsible for the synthesis of mitochondrial genome-encoded proteins, including at least some of the essential transmembrane subunits of the mitochondrial respiratory chain. The mitoribosomes are attached to the mitochondrial inner membrane and translation products are cotranslationally integrated into the membrane. This is Small ribosomal subunit protein uS2m (MRP4) from Saccharomyces cerevisiae (strain ATCC 204508 / S288c) (Baker's yeast).